The sequence spans 666 residues: TATA box-binding protein-associated factor RNA polymerase I subunit B (666 aa).

The segment at 1–29 (MICTECENDAFDEEDDGYYYCQRCGVQVE) adopts an RRN7-type zinc-finger fold. C3, C6, C21, and C24 together coordinate Zn(2+). A B-reader region spans residues 30–64 (NLIQTGVDDGDLIGEGGGTQGALYNPKHRRTEPQP). Disordered regions lie at residues 45–110 (GGGT…VDKE) and 189–208 (DSEH…LKRH). The interval 65 to 80 (ITPSQPRFTDDTSRYS) is B-linker. Residues 78–89 (RYSQFKSQFESE) are compositionally biased toward polar residues. The N-terminal cyclin fold stretch occupies residues 81-285 (QFKSQFESEN…REQMGERSAA (205 aa)). Basic and acidic residues-rich tracts occupy residues 90 to 110 (NGNK…VDKE) and 189 to 202 (DSEH…VKDA). The C-terminal cyclin fold stretch occupies residues 286–288 (CPV). Positions 515 to 548 (SDGNNPCSSSSRRNESVSIGLDLSSSEHRESSSP) are disordered. The span at 539-548 (SSEHRESSSP) shows a compositional bias: basic and acidic residues.

Belongs to the RRN7/TAF1B family. In terms of assembly, interacts with TFIIF. Interacts with MEE14/CBP1, TBP1 and NRPB1 (via CTD). Expressed at high levels in seedlings, inflorescences and young siliques and at lower levels in roots. Not detected in leaves and stems. Detected in root tips and shoot apical meristems, in anthers, primarily in microspores with weaker expression in mature pollen grains and in the central cell of the mature female gametophyte. Not expressed in synergids, egg cells, antipodal cells, endosperm cells and fertilized egg cells.

It is found in the nucleus. It localises to the nucleolus. Its function is as follows. Component of RNA polymerase I core factor complex that acts as a GTF2B/TFIIB-like factor and plays a key role in multiple steps during transcription initiation such as pre-initiation complex (PIC) assembly and postpolymerase recruitment events in polymerase I (Pol I) transcription. Binds rDNA promoters and plays a role in Pol I recruitment. Required for the development of the one-cell zygote and endosperm in embryos. Required for micropylar pollen tube guidance, but has no effect on ovule development and gametophytic cell fate specification. May regulate the transcription of secreted cysteine-rich peptide (CRP) genes in the embryo sac. This chain is TATA box-binding protein-associated factor RNA polymerase I subunit B, found in Arabidopsis thaliana (Mouse-ear cress).